The primary structure comprises 174 residues: Keratin-associated protein 1-5 (174 aa).

Residues Cys-3–Pro-172 form a 15 X 5 AA repeats of C-C-[QEPVRC]-[TPIVLE]-[SRHVP] region.

Belongs to the KRTAP type 1 family. As to quaternary structure, interacts with hair keratins. In terms of tissue distribution, expressed in the middle/upper portions of the hair cortex, in the region termed the keratogenous zone.

In terms of biological role, in the hair cortex, hair keratin intermediate filaments are embedded in an interfilamentous matrix, consisting of hair keratin-associated proteins (KRTAP), which are essential for the formation of a rigid and resistant hair shaft through their extensive disulfide bond cross-linking with abundant cysteine residues of hair keratins. The matrix proteins include the high-sulfur and high-glycine-tyrosine keratins. This Homo sapiens (Human) protein is Keratin-associated protein 1-5 (KRTAP1-5).